The chain runs to 622 residues: 1,4-alpha-glucan branching enzyme GlgB (622 aa).

Catalysis depends on Asp-306, which acts as the Nucleophile. The active-site Proton donor is Glu-358. Residues 581–606 are disordered; sequence YGGSNVGNRGAVHSDPVEKHGHSHSL.

It belongs to the glycosyl hydrolase 13 family. GlgB subfamily. Monomer.

The enzyme catalyses Transfers a segment of a (1-&gt;4)-alpha-D-glucan chain to a primary hydroxy group in a similar glucan chain.. It participates in glycan biosynthesis; glycogen biosynthesis. In terms of biological role, catalyzes the formation of the alpha-1,6-glucosidic linkages in glycogen by scission of a 1,4-alpha-linked oligosaccharide from growing alpha-1,4-glucan chains and the subsequent attachment of the oligosaccharide to the alpha-1,6 position. The sequence is that of 1,4-alpha-glucan branching enzyme GlgB from Salinibacter ruber (strain DSM 13855 / M31).